The sequence spans 407 residues: Arylacetamide deacetylase-like 4 family member 1 (407 aa).

Residues 1 to 4 (MLYL) are Cytoplasmic-facing. A helical; Signal-anchor for type II membrane protein transmembrane segment spans residues 5–25 (VGFLLATVCLLVLGVNVWVLI). The Lumenal portion of the chain corresponds to 26 to 407 (DHFLTIDVPP…NAVVSYIKDL (382 aa)). The Involved in the stabilization of the negatively charged intermediate by the formation of the oxyanion hole motif lies at 119–121 (HGG). A glycan (N-linked (GlcNAc...) asparagine) is linked at N168. Catalysis depends on residues S193, D347, and H377.

The protein belongs to the 'GDXG' lipolytic enzyme family.

Its subcellular location is the membrane. This is Arylacetamide deacetylase-like 4 family member 1 from Mus musculus (Mouse).